The chain runs to 245 residues: MKSIIKHILFVVLLISIIHDSQCRWFILKNRLSHFINRISELKEQDSREAKLYKSFDIDCGKNFLKVQQNSKMLVNEEEELVFKVASSLKCSSEDAAFKFYFDEIIRPKLKKGLSCFELHLQQQEPDSKLIKNAIITKAEVEKCKKQSPIDDLKEVENGLEDVIGPLDVFSCGAVTSVDDYVLFVTKSVLIKFGESSEAVKKVEMEKLKEYLKDIAFTTAECIFKRFETDPKGTWFIFVGYVARF.

The N-terminal stretch at 1–16 (MKSIIKHILFVVLLIS) is a signal peptide. Ser33, Ser40, Ser92, Ser93, and Ser115 each carry phosphoserine.

In terms of tissue distribution, salivary gland.

It localises to the secreted. Used by the larvae to construct a supramolecular structure, the larval tube. This Chironomus thummi thummi (Midge) protein is Balbiani ring A 28 kDa protein.